An 835-amino-acid chain; its full sequence is MKVLALRHSVAQVYADTQVYVHDDIKDSYENAFLISNLTTHNILYLNYSIKTLEILNKSGIAAIALQSLEELFTLIRCNFTYDYELDIIYLHDYSYYTNNEIRTDQHWITKTNIEEYLLPGWKLTYVGYNGSETRGHYNFSFKCQNAATDDDLIIEYIYSEALDFQNFMLKKIKERMTTSLPIARLSNRVFRDKLFPSLLKEHKNVVNVGPRNESMFTFLNYPTIKQFSNGAYLVKDTIKLKQERWLGKRISQFDIGQYKNMLNVLTAIYYYYNLYKSKPIIYMIGSAPSYWIYDVRHYSDFFFETWDPLDTPYSSIHHKELFFINDVKKLKDNSILYIDIRTDRGNADWKKWRKTVEEQTINNLDIAYEYLRTGKAKVCCVKMTAMHLELPISAKLLHHPTTEIRSEFYLLLDTWDLTNIRRFIPKGVLYSFINNIITENVFIQQPFKVKVLNDSYIVALYALSNDFNNRSEVIKLINNQKQSLITVRINNTFKDEPKVGFKNIYDWTFLPTDFDTKEAIITSYDGCLGLFGLSISLASKPTGNNHLFILSGTDKYYKLDQFANHTSISRRSHQIRFSESATSYSGYIFRDLSNNNFNLIGTNIENSVSGHIYNALIYYRYNYSFDLKRWIYLHSIDKVDIEGGKYYEHAPIELIYACRSAKEFATLQDDLTVLRYSNEIENYINTVYSITYADDPNYFIGIQFRNIPYKYDVKIPHLTFGVLHISDNMVPDVIDILKIMKNELFKMDITTSYTYMLSDGIYVANVSGVLSTYFKIYNVFYKNQITFGQSRMFIPHITLSFNNMRTVRIETTKLQIKSIYLRKIKGDTVFDMVE.

An N7-methyltransferase activity region spans residues lysine 171–arginine 245. Residues tryptophan 246–glycine 428 form a 2'-O-methyltransferase activity region. The N7-methyltransferase activity stretch occupies residues valine 429–aspartate 555. The GTase/RTPase activity stretch occupies residues lysine 556–threonine 692. The tract at residues tyrosine 693 to glutamate 835 is 2'-5'-phosphodiesterase activity. Residues histidine 718, threonine 720, histidine 797, and threonine 799 each act as for 2'-5'-phosphodiesterase activity in the active site.

Belongs to the rotavirus VP3 family. Interacts with VP1. Interacts with VP2.

The protein resides in the virion. The catalysed reaction is a 5'-end diphospho-ribonucleoside in mRNA + GTP + H(+) = a 5'-end (5'-triphosphoguanosine)-ribonucleoside in mRNA + diphosphate. The enzyme catalyses a 5'-end (5'-triphosphoguanosine)-ribonucleoside in mRNA + S-adenosyl-L-methionine = a 5'-end (N(7)-methyl 5'-triphosphoguanosine)-ribonucleoside in mRNA + S-adenosyl-L-homocysteine. It carries out the reaction 5'-triphosphoadenylyl-(2'-&gt;5')-adenylyl-(2'-&gt;5')-adenosine + 2 H2O = 2 AMP + ATP + 2 H(+). Its function is as follows. Multifunctional enzyme involved in mRNA capping. Catalyzes the formation of the 5' cap structure on the viral plus-strand transcripts. Specifically binds to GTP and displays guanylyltransferase and methyltransferase activities. Has affinity for ssRNA but not for dsRNA. Capping activity is non-specific and caps RNAs that initiate with either a G or an A residue. Together with VP1 polymerase, forms a VP1-VP3 complex positioned near the channels situated at each of the five-fold vertices of the core. Following infection, the outermost layer of the virus is lost, leaving a double-layered particle (DLP) made up of the core and VP6 shell. VP1 then catalyzes the transcription of fully conservative plus-strand genomic RNAs that are capped by VP3 and extruded through the DLP's channels into the cytoplasm where they function as mRNAs for translation of viral proteins. DLPs probably have an RNA triphosphatase activity as well, whereas open cores do not. Functionally, counteracts the host innate immune response thanks to its phosphodiesterase that degrades the 5'-triphosphorylated, 2'-5' linked adenylate oligomers produced by the host cell IFN-inducible 2',5'-oligoadenylate synthetase (OAS). The host RNaseL is therefore not activated. The polypeptide is Protein VP3 (Rotavirus A (strain RVA/SA11-Both/G3P5B[2]) (RV-A)).